The chain runs to 429 residues: GTPase Obg (429 aa).

Residues 1–158 form the Obg domain; that stretch reads MFVDHVKIYV…LNVILELKVL (158 aa). Residues 119 to 143 are disordered; sequence AGRGGRGNSRFATPANPAPELSEKG. One can recognise an OBG-type G domain in the interval 159–329; that stretch reads ADVGLVGFPS…LLFAIADLLE (171 aa). GTP is bound by residues 165-172, 190-194, 212-215, 282-285, and 310-312; these read GFPSVGKS, FTTIV, DLPG, NKMD, and SAV. Positions 172 and 192 each coordinate Mg(2+). The 79-residue stretch at 351–429 folds into the OCT domain; the sequence is KHEAKGEDFE…LQEFEFEFVD (79 aa).

The protein belongs to the TRAFAC class OBG-HflX-like GTPase superfamily. OBG GTPase family. Monomer. It depends on Mg(2+) as a cofactor.

It is found in the cytoplasm. An essential GTPase which binds GTP, GDP and possibly (p)ppGpp with moderate affinity, with high nucleotide exchange rates and a fairly low GTP hydrolysis rate. Plays a role in control of the cell cycle, stress response, ribosome biogenesis and in those bacteria that undergo differentiation, in morphogenesis control. This Lysinibacillus sphaericus (strain C3-41) protein is GTPase Obg.